Consider the following 313-residue polypeptide: Probable cell division protein WhiA (313 aa).

Residues 278–311 (SLKELGKLLDPPLSKSGVNHRLRRIKSIANEIRG) constitute a DNA-binding region (H-T-H motif).

This sequence belongs to the WhiA family.

In terms of biological role, involved in cell division and chromosome segregation. This is Probable cell division protein WhiA from Halothermothrix orenii (strain H 168 / OCM 544 / DSM 9562).